Consider the following 475-residue polypeptide: Integrator complex subunit 15 (475 aa).

Residues 402 to 444 (YPHIHPGRPSPLSPHSPHQSTLSSPHSPHTVLTAHPTHPALAP) form a disordered region. The span at 416 to 430 (HSPHQSTLSSPHSPH) shows a compositional bias: low complexity.

This sequence belongs to the Integrator subunit 15 family. Component of the Integrator complex, composed of core subunits INTS1, INTS2, INTS3, INTS4, INTS5, INTS6, INTS7, INTS8, INTS9/RC74, INTS10, INTS11/CPSF3L, INTS12, INTS13, INTS14 and INTS15. The core complex associates with protein phosphatase 2A subunits PPP2CA and PPP2R1A, to form the Integrator-PP2A (INTAC) complex. INTS15 is part of the tail subcomplex, composed of INTS10, INTS13, INTS14 and INTS15.

The protein resides in the nucleus. The protein localises to the chromosome. Component of the integrator complex, a multiprotein complex that terminates RNA polymerase II (Pol II) transcription in the promoter-proximal region of genes. The integrator complex provides a quality checkpoint during transcription elongation by driving premature transcription termination of transcripts that are unfavorably configured for transcriptional elongation: the complex terminates transcription by (1) catalyzing dephosphorylation of the C-terminal domain (CTD) of Pol II subunit POLR2A/RPB1 and SUPT5H/SPT5, (2) degrading the exiting nascent RNA transcript via endonuclease activity and (3) promoting the release of Pol II from bound DNA. The integrator complex is also involved in terminating the synthesis of non-coding Pol II transcripts, such as enhancer RNAs (eRNAs), small nuclear RNAs (snRNAs), telomerase RNAs and long non-coding RNAs (lncRNAs). INTS15 is part of the integrator tail module that acts as a platform for the recruitment of transcription factors at promoters. Within the integrator complex, INTS15 is required to bridge different integrator modules. The polypeptide is Integrator complex subunit 15 (ints15) (Danio rerio (Zebrafish)).